A 439-amino-acid polypeptide reads, in one-letter code: Exodeoxyribonuclease 7 large subunit (439 aa).

This sequence belongs to the XseA family. In terms of assembly, heterooligomer composed of large and small subunits.

The protein localises to the cytoplasm. The catalysed reaction is Exonucleolytic cleavage in either 5'- to 3'- or 3'- to 5'-direction to yield nucleoside 5'-phosphates.. Its function is as follows. Bidirectionally degrades single-stranded DNA into large acid-insoluble oligonucleotides, which are then degraded further into small acid-soluble oligonucleotides. This Haemophilus influenzae (strain 86-028NP) protein is Exodeoxyribonuclease 7 large subunit.